The chain runs to 181 residues: Oligoribonuclease (181 aa).

One can recognise an Exonuclease domain in the interval 8–171 (LIWIDLEMTG…QDIQESIAEL (164 aa)). Tyrosine 129 is a catalytic residue.

It belongs to the oligoribonuclease family.

It is found in the cytoplasm. Functionally, 3'-to-5' exoribonuclease specific for small oligoribonucleotides. This Shewanella oneidensis (strain ATCC 700550 / JCM 31522 / CIP 106686 / LMG 19005 / NCIMB 14063 / MR-1) protein is Oligoribonuclease.